An 886-amino-acid polypeptide reads, in one-letter code: Protein translocase subunit SecA (886 aa).

ATP-binding positions include Gln-81, 99–103 (GEGKT), and Asp-489.

This sequence belongs to the SecA family.

It localises to the plastid. The protein resides in the chloroplast stroma. It is found in the chloroplast thylakoid membrane. It catalyses the reaction ATP + H2O + cellular proteinSide 1 = ADP + phosphate + cellular proteinSide 2.. Functionally, has a central role in coupling the hydrolysis of ATP to the transfer of proteins across the thylakoid membrane. The chain is Protein translocase subunit SecA from Phaeodactylum tricornutum (strain CCAP 1055/1).